The sequence spans 339 residues: Undifferentiated embryonic cell transcription factor 1 (339 aa).

Disordered stretches follow at residues 1–62 and 144–270; these read MLLR…QRTP and MGLL…QVAP. Ser-15, Ser-18, Ser-48, and Ser-54 each carry phosphoserine. Residues 154-170 show a composition bias toward basic residues; sequence RVRRRSTGPGRPQRRGR. Low complexity-rich tracts occupy residues 171–193 and 218–229; these read SSLS…PLAA and TSSPPLTSTDTL. Residues 261–270 are compositionally biased toward polar residues; it reads GRASSPQVAP. Residues 279–310 form a leucine-zipper region; it reads QTLTHLGDISTVLGPLRDQLSTLNQHVEHLRG.

Binds to the N-terminal region of ATF2. Associates with the TFIID complex through interaction with TBP. In terms of processing, phosphorylated. In terms of tissue distribution, expressed mainly in pluripotent cells with expression rapidly down-regulated upon cell differentiation.

The protein resides in the nucleus. In terms of biological role, acts as a transcriptional coactivator of ATF2. This is Undifferentiated embryonic cell transcription factor 1 from Mus musculus (Mouse).